The primary structure comprises 505 residues: T-cell activation GTPase-activating protein 1 (505 aa).

Disordered regions lie at residues 81 to 147 (DDSL…SESS), 160 to 212 (QQDR…DPFT), 242 to 293 (QGHI…QREI), 311 to 339 (RTSS…SQLS), and 414 to 441 (KPST…HRLS). Residues 90–102 (SDVSTLQNDSAYD) show a composition bias toward polar residues. A compositionally biased stretch (acidic residues) spans 203-212 (EGDEAEDPFT). Residues 250-262 (SRSSPGESLGSSP) show a composition bias toward low complexity. Composition is skewed to basic and acidic residues over residues 283–292 (KTDKTKPQRE) and 318–336 (EKSK…RKES).

This chain is T-cell activation GTPase-activating protein 1 (Tagap1), found in Mus musculus (Mouse).